Here is a 336-residue protein sequence, read N- to C-terminus: Holliday junction branch migration complex subunit RuvB (336 aa).

The large ATPase domain (RuvB-L) stretch occupies residues 4–184 (ADRLISAGTT…FGIVQRLEFY (181 aa)). Residues I23, R24, G65, K68, T69, T70, 131-133 (EDY), R174, Y184, and R221 each bind ATP. Residue T69 participates in Mg(2+) binding. The segment at 185–255 (QVPDLQYIVS…IAAQALDMLN (71 aa)) is small ATPAse domain (RuvB-S). Positions 258 to 336 (AEGFDYMDRK…HFGITPPEMP (79 aa)) are head domain (RuvB-H). The DNA site is built by R294, R313, and R318.

It belongs to the RuvB family. As to quaternary structure, homohexamer. Forms an RuvA(8)-RuvB(12)-Holliday junction (HJ) complex. HJ DNA is sandwiched between 2 RuvA tetramers; dsDNA enters through RuvA and exits via RuvB. An RuvB hexamer assembles on each DNA strand where it exits the tetramer. Each RuvB hexamer is contacted by two RuvA subunits (via domain III) on 2 adjacent RuvB subunits; this complex drives branch migration. In the full resolvosome a probable DNA-RuvA(4)-RuvB(12)-RuvC(2) complex forms which resolves the HJ.

It is found in the cytoplasm. It catalyses the reaction ATP + H2O = ADP + phosphate + H(+). The RuvA-RuvB-RuvC complex processes Holliday junction (HJ) DNA during genetic recombination and DNA repair, while the RuvA-RuvB complex plays an important role in the rescue of blocked DNA replication forks via replication fork reversal (RFR). RuvA specifically binds to HJ cruciform DNA, conferring on it an open structure. The RuvB hexamer acts as an ATP-dependent pump, pulling dsDNA into and through the RuvAB complex. RuvB forms 2 homohexamers on either side of HJ DNA bound by 1 or 2 RuvA tetramers; 4 subunits per hexamer contact DNA at a time. Coordinated motions by a converter formed by DNA-disengaged RuvB subunits stimulates ATP hydrolysis and nucleotide exchange. Immobilization of the converter enables RuvB to convert the ATP-contained energy into a lever motion, pulling 2 nucleotides of DNA out of the RuvA tetramer per ATP hydrolyzed, thus driving DNA branch migration. The RuvB motors rotate together with the DNA substrate, which together with the progressing nucleotide cycle form the mechanistic basis for DNA recombination by continuous HJ branch migration. Branch migration allows RuvC to scan DNA until it finds its consensus sequence, where it cleaves and resolves cruciform DNA. This chain is Holliday junction branch migration complex subunit RuvB, found in Shigella boydii serotype 18 (strain CDC 3083-94 / BS512).